The following is a 348-amino-acid chain: Protein DMR6-LIKE OXYGENASE 2 (348 aa).

One can recognise a Fe2OG dioxygenase domain in the interval 194 to 294 (KHGQHMAINY…RISIPTFYCP (101 aa)). 3 residues coordinate Fe cation: His-219, Asp-221, and His-275. Arg-285 lines the 2-oxoglutarate pocket.

It belongs to the iron/ascorbate-dependent oxidoreductase family. Fe(2+) serves as cofactor.

The enzyme catalyses salicylate + NADH + O2 + H(+) = 2,3-dihydroxybenzoate + NAD(+) + H2O. In terms of biological role, converts salicylic acid (SA) to 2,3-dihydroxybenzoic acid (2,3-DHBA). Negative regulator of defense against Hyaloperonospora arabidopsidis. Functionally, (Microbial infection) Confers susceptibility to the downy mildew pathogen Hyaloperonospora arabidopsidis. This chain is Protein DMR6-LIKE OXYGENASE 2, found in Arabidopsis thaliana (Mouse-ear cress).